A 151-amino-acid chain; its full sequence is Globin (151 aa).

Residues 2–151 (SLSDADKKAL…AAFNETLKKA (150 aa)) form the Globin domain. Residue His-100 participates in heme b binding.

It belongs to the globin family.

This is Globin from Biomphalaria glabrata (Bloodfluke planorb).